A 243-amino-acid chain; its full sequence is Derlin-1.2 (243 aa).

At 1-20 (MSSPAEYYKSLPPISKAYGT) the chain is on the cytoplasmic side. A helical transmembrane segment spans residues 21–41 (LCFFTTVLVRLHILNPLFLYL). Residues 42–54 (YYPRVFKKFEVWR) are Lumenal-facing. A helical transmembrane segment spans residues 55–75 (IFTSFFFLGPFSINFGIRLLM). Over 76–94 (IARYGVMLEKGAFDKRTAD) the chain is Cytoplasmic. The chain crosses the membrane as a helical span at residues 95-115 (FLWMMIFGAISLLVLSVIPQL). The Lumenal portion of the chain corresponds to 116-155 (NTYVLGLPMVSMLVYVWSRENPNAQINIYGILQLKAFYLP). Residues 156-176 (WVMLLLDVIFGSPLMPGLLGI) form a helical membrane-spanning segment. Residues 177 to 243 (MVGHLYYYFA…FRGRSYRLNQ (67 aa)) are Cytoplasmic-facing.

The protein belongs to the derlin family. Expressed in roots and endosperm.

The protein localises to the endoplasmic reticulum membrane. May be involved in the degradation process of specific misfolded endoplasmic reticulum (ER) luminal proteins. The protein is Derlin-1.2 (DER1.2) of Zea mays (Maize).